Consider the following 188-residue polypeptide: Peptide deformylase (188 aa).

Fe cation-binding residues include Cys107 and His149. Residue Glu150 is part of the active site. His153 contributes to the Fe cation binding site.

This sequence belongs to the polypeptide deformylase family. The cofactor is Fe(2+).

It carries out the reaction N-terminal N-formyl-L-methionyl-[peptide] + H2O = N-terminal L-methionyl-[peptide] + formate. In terms of biological role, removes the formyl group from the N-terminal Met of newly synthesized proteins. Requires at least a dipeptide for an efficient rate of reaction. N-terminal L-methionine is a prerequisite for activity but the enzyme has broad specificity at other positions. The chain is Peptide deformylase from Thermosynechococcus vestitus (strain NIES-2133 / IAM M-273 / BP-1).